We begin with the raw amino-acid sequence, 27 residues long: GFGSLFKFLGKKVLKTVAKQAAKKQME.

At E27 the chain carries Glutamic acid 1-amide.

Expressed by the venom gland.

It localises to the secreted. The protein is Cupiennin-3b of Cupiennius salei (American wandering spider).